Consider the following 526-residue polypeptide: Tyrosine-protein kinase transforming protein Src (526 aa).

Residues Met1 to Gly52 form a disordered region. Gly2 carries the N-myristoyl glycine; by host lipid modification. Basic and acidic residues predominate over residues Lys7–His25. 2 consecutive SH3 domains span residues Thr71–Pro139 and Gly81–Ser142. The SH2 domain maps to Trp148 to Cys245. Residues Leu267 to Leu517 form the Protein kinase domain. ATP is bound by residues Leu273–Val281 and Lys295. Asp386 serves as the catalytic Proton acceptor. Tyr416 bears the Phosphotyrosine; by autocatalysis mark.

Belongs to the protein kinase superfamily. Tyr protein kinase family. SRC subfamily. Homodimer. In terms of processing, the phosphorylated form is termed pp60v-src.

It carries out the reaction L-tyrosyl-[protein] + ATP = O-phospho-L-tyrosyl-[protein] + ADP + H(+). Its function is as follows. This phosphoprotein, required for both the initiation and the maintenance of neoplastic transformation, is a protein kinase that catalyzes the phosphorylation of tyrosine residues in vitro. The chain is Tyrosine-protein kinase transforming protein Src (V-SRC) from Gallus gallus (Chicken).